Reading from the N-terminus, the 400-residue chain is Nicotinate phosphoribosyltransferase (400 aa).

A Phosphohistidine; by autocatalysis modification is found at His220.

This sequence belongs to the NAPRTase family. Transiently phosphorylated on a His residue during the reaction cycle. Phosphorylation strongly increases the affinity for substrates and increases the rate of nicotinate D-ribonucleotide production. Dephosphorylation regenerates the low-affinity form of the enzyme, leading to product release.

It catalyses the reaction nicotinate + 5-phospho-alpha-D-ribose 1-diphosphate + ATP + H2O = nicotinate beta-D-ribonucleotide + ADP + phosphate + diphosphate. Its pathway is cofactor biosynthesis; NAD(+) biosynthesis; nicotinate D-ribonucleotide from nicotinate: step 1/1. Functionally, catalyzes the synthesis of beta-nicotinate D-ribonucleotide from nicotinate and 5-phospho-D-ribose 1-phosphate at the expense of ATP. The protein is Nicotinate phosphoribosyltransferase of Salmonella dublin (strain CT_02021853).